A 295-amino-acid chain; its full sequence is Ubiquitin-conjugating enzyme E2-34 kDa (295 aa).

The UBC core domain maps to 7 to 169; the sequence is TASSLLLRQY…VKMEVERSKQ (163 aa). C95 functions as the Glycyl thioester intermediate in the catalytic mechanism. Residues 185–295 are disordered; sequence ISQSKLDEPE…EDVERVSKKI (111 aa). S186 carries the phosphoserine modification. The span at 189–200 shows a compositional bias: basic and acidic residues; that stretch reads KLDEPESNKDMA. Composition is skewed to acidic residues over residues 207-226 and 234-265; these read SDLD…DYDD and EDDD…DSID. Positions 269-279 are enriched in basic and acidic residues; it reads VMDRKQPHKAE. A phosphoserine mark is found at S282 and S292.

The protein belongs to the ubiquitin-conjugating enzyme family. Interacts with CDC53. Component of the E3 ubiquitin ligase complexes SCF with CDC53, SKP1/CBF3D, HRT1 and some F-box proteins like MET30 and CDC4.

Its subcellular location is the cytoplasm. It is found in the nucleus. It catalyses the reaction S-ubiquitinyl-[E1 ubiquitin-activating enzyme]-L-cysteine + [E2 ubiquitin-conjugating enzyme]-L-cysteine = [E1 ubiquitin-activating enzyme]-L-cysteine + S-ubiquitinyl-[E2 ubiquitin-conjugating enzyme]-L-cysteine.. The protein operates within protein modification; protein ubiquitination. In terms of biological role, catalyzes the covalent attachment of ubiquitin to other proteins. Capable, in vitro, to ubiquitinate histone H2A. Mediates the initiation of DNA replication (transition of G1 to S phase in cell cycle). Essential component of the E3 ubiquitin ligase complex SCF (SKP1-CUL1-F-box protein), which mediates the ubiquitination and subsequent proteasomal degradation of target proteins. Involved in the regulation of methionine biosynthesis genes and in the degradation of CDC6 together with CDC4 and CDC53. The chain is Ubiquitin-conjugating enzyme E2-34 kDa (CDC34) from Saccharomyces cerevisiae (strain ATCC 204508 / S288c) (Baker's yeast).